A 210-amino-acid chain; its full sequence is Large ribosomal subunit protein uL3 (210 aa).

This sequence belongs to the universal ribosomal protein uL3 family. In terms of assembly, part of the 50S ribosomal subunit. Forms a cluster with proteins L14 and L19.

Its function is as follows. One of the primary rRNA binding proteins, it binds directly near the 3'-end of the 23S rRNA, where it nucleates assembly of the 50S subunit. This Solibacter usitatus (strain Ellin6076) protein is Large ribosomal subunit protein uL3.